Reading from the N-terminus, the 967-residue chain is MSEGTIRINKVLREFNISLERAVDYLKDKGHVIESNPNTKISDEVYNVLSNQFAGDKGNKDASKEVGEEKRKEKEALRVERENEIEEKRKVDEERQRQEVIRAKAVVTGLKQVGTIDLSAKSVIKPTIIPGVKAEAKAEVKTEAKVEAKTEVKVEVKVEPKAEMPVAKTPEKSEQPKQHVAKETLVKEKIFAKEPAKNVAKPIVGKTPEATSKPSVEDAPVDETHETKYTKLTGPTFSGQTIDLSQFNKPKKIIEPNKGGAKPAGAGNNNNNKNKRKRIPTKSGEANATPRVPGTNLIRPNTGGNATGGGFNRANKPGFVKGARPAIVPKVEPTEEDVKNQIKETLERLQGKGNKSKAAKYRRDKRDTHRQKSDDEQRELEAGSKTIKVTEFVTVGEVATMMDVPITKVIGTCMSLGIMVTMNQRLDAETLTIVCDEFGFEVEFITTDLEENIEVVEDSAEDLVHRAPIVTVMGHVDHGKTSLLDYIRKTNVIAGESGGITQHIGAYGVELENGQKIAFLDTPGHEAFTAMRARGAQVTDIAIIVVAADDDIMPQTKEAISHAQAANVPIIFAINKVDKQNANPEKIKEKLAAMNFLVEDWGGKYQSQDISAKTGIGMKELLEKVLLEAEVLDLKANPNKPATGTVVEAFLDKGRGYVSTVLVQAGTMRVGDYILAGKNHGKIKAMQDERGNNVTEAGPSTPISILGLAGAPTAGDKFNIFADEREAKAIAAKRTQLMREQSVRVQRHITLDEIGRRIALGQFKELNIILKGDVDGSVEALSDSFSKLSTPEIQINIIHKGVGAITETDVMLASASDAIIIGFNVRPAGNAKQLAEKEEIDIRHYSIIYAAIDDLRDAMEGMLSPEMKEEITGLAGVRELFKISKVGTIAGCMITDGKILRANKVRVIRDNVVIHTGDIIALKRFKDDVKEVAKGYDCGIQIKGFNEIEIDDIIEGFTEVAVKRKLK.

2 disordered regions span residues 201–320 (KPIV…PGFV) and 349–382 (LQGKGNKSKAAKYRRDKRDTHRQKSDDEQRELEA). Residues 233-248 (TGPTFSGQTIDLSQFN) show a composition bias toward polar residues. Residues 256–272 (PNKGGAKPAGAGNNNNN) are compositionally biased toward low complexity. Positions 354–363 (NKSKAAKYRR) are enriched in basic residues. Residues 364–382 (DKRDTHRQKSDDEQRELEA) show a composition bias toward basic and acidic residues. Residues 465–635 (HRAPIVTVMG…LLEAEVLDLK (171 aa)) enclose the tr-type G domain. The interval 474–481 (GHVDHGKT) is G1. 474–481 (GHVDHGKT) is a binding site for GTP. The tract at residues 499–503 (GITQH) is G2. Residues 521-524 (DTPG) form a G3 region. Residues 521 to 525 (DTPGH) and 575 to 578 (NKVD) contribute to the GTP site. The tract at residues 575–578 (NKVD) is G4. Residues 611-613 (SAK) form a G5 region.

It belongs to the TRAFAC class translation factor GTPase superfamily. Classic translation factor GTPase family. IF-2 subfamily.

The protein resides in the cytoplasm. One of the essential components for the initiation of protein synthesis. Protects formylmethionyl-tRNA from spontaneous hydrolysis and promotes its binding to the 30S ribosomal subunits. Also involved in the hydrolysis of GTP during the formation of the 70S ribosomal complex. This is Translation initiation factor IF-2 from Flavobacterium psychrophilum (strain ATCC 49511 / DSM 21280 / CIP 103535 / JIP02/86).